Reading from the N-terminus, the 588-residue chain is Ankyrin repeat and SOCS box protein 15 (588 aa).

11 ANK repeats span residues 75–104 (KGWF…KTLW), 110–139 (DGET…WPNT), 143–172 (KGET…SLDQ), 176–205 (KRWS…NVHL), 209–238 (FGVT…DVLA), 242–271 (DGAS…SGNI), 275–304 (AGHL…KHAI), 307–336 (SGLT…DVNS), 349–378 (ERKT…DPNL), 379–408 (DPLN…NVNC), and 416–444 (TRFP…QVEM). Residues 524 to 579 (WPEIRQILENPCSLKHLCRLKIRRLMGLQRLCQPTLMEKLSLPPTIQRYILFKEYD) form the SOCS box domain.

This sequence belongs to the ankyrin SOCS box (ASB) family.

It participates in protein modification; protein ubiquitination. Its function is as follows. May be a substrate-recognition component of a SCF-like ECS (Elongin-Cullin-SOCS-box protein) E3 ubiquitin-protein ligase complex which mediates the ubiquitination and subsequent proteasomal degradation of target proteins. The sequence is that of Ankyrin repeat and SOCS box protein 15 (ASB15) from Bos taurus (Bovine).